We begin with the raw amino-acid sequence, 394 residues long: Ceramide glucosyltransferase-A (394 aa).

Over 1-10 the chain is Lumenal; it reads MAVLDLALQG. Residues 11 to 32 traverse the membrane as a helical segment; the sequence is LAIFGCVLFFVLWFMHFLSIVY. The Cytoplasmic portion of the chain corresponds to 33–195; it reads TRLHLNKKIS…QVYFGTSHPR (163 aa). A short sequence motif (D1) is located at residue aspartate 92. Aspartate 144 is a short sequence motif (D2). A helical transmembrane segment spans residues 196–215; sequence SYISANVTGFKCVTGMSCLM. Residues 216-287 are Lumenal-facing; it reads RKEVLDQAGG…KLRINMLPAT (72 aa). Position 236 (aspartate 236) is a short sequence motif, D3. The active-site Proton acceptor is the aspartate 236. The (Q/R)XXRW motif lies at 272-276; that stretch reads RMIRW. The chain crosses the membrane as a helical span at residues 288–304; the sequence is IICEPISECFVASLIIG. At 305 to 309 the chain is on the cytoplasmic side; sequence WAAHH. Residues 310–328 form a helical membrane-spanning segment; it reads IFRWDIMVFFMCHCLAWFI. The Lumenal segment spans residues 329-348; it reads FDYIQLRGVQGGPLNFSKLD. A helical transmembrane segment spans residues 349–369; sequence YAVAWFIRESMTIYIFLSALW. Residues 370–394 lie on the Cytoplasmic side of the membrane; sequence DPTISWRTGRFRLRCGGTAEEILDV.

The protein belongs to the glycosyltransferase 2 family. In terms of tissue distribution, at the late gastrula stage, weakly expressed ubiquitously. As neurulation proceeds (stages 15-16), expression moves towards the dorsal structures: involuted paraxial mesoderm and neural folds. In the tailbud embryo (stage 28), expression is restricted to the notochord. At later stages (stage 35), expression remains in the notochord and also appears weakly in the cephalic region.

Its subcellular location is the golgi apparatus membrane. It carries out the reaction an N-acylsphing-4-enine + UDP-alpha-D-glucose = a beta-D-glucosyl-(1&lt;-&gt;1')-N-acylsphing-4-enine + UDP + H(+). The catalysed reaction is UDP-alpha-D-xylose + an N-acylsphing-4-enine = a beta-D-xylosyl-(1&lt;-&gt;1')-N-acylsphing-4-enine + UDP + H(+). It catalyses the reaction N-(9Z-octadecenoyl)-sphing-4-enine + UDP-alpha-D-xylose = beta-D-xylosyl-(1&lt;-&gt;1')-N-(9Z-octadecenoyl)-sphing-4-enine + UDP + H(+). It functions in the pathway lipid metabolism; sphingolipid metabolism. Functionally, participates in the initial step of the glucosylceramide-based glycosphingolipid/GSL synthetic pathway at the cytosolic surface of the Golgi. Catalyzes the transfer of glucose from UDP-glucose to ceramide to produce glucosylceramide/GlcCer (such as beta-D-glucosyl-(1&lt;-&gt;1')-N-acylsphing-4-enine). Glucosylceramide is the core component of glycosphingolipids/GSLs, amphipathic molecules consisting of a ceramide lipid moiety embedded in the outer leaflet of the membrane, linked to one of hundreds of different externally oriented oligosaccharide structures. Glycosphingolipids are essential components of membrane microdomains that mediate membrane trafficking and signal transduction. They are implicated in many fundamental cellular processes, including growth, differentiation, migration, morphogenesis, cell-to-cell and cell-to-matrix interactions. Glycosphingolipids are required for convergence extension movements during early development. Catalyzes the synthesis of xylosylceramide/XylCer (such as beta-D-xylosyl-(1&lt;-&gt;1')-N-acylsphing-4-enine) using UDP-Xyl as xylose donor. This chain is Ceramide glucosyltransferase-A (ugcg-a), found in Xenopus laevis (African clawed frog).